Consider the following 160-residue polypeptide: Small ribosomal subunit protein uS7 (160 aa).

It belongs to the universal ribosomal protein uS7 family. As to quaternary structure, part of the 30S ribosomal subunit. Contacts proteins S9 and S11.

Its function is as follows. One of the primary rRNA binding proteins, it binds directly to 16S rRNA where it nucleates assembly of the head domain of the 30S subunit. Is located at the subunit interface close to the decoding center, probably blocks exit of the E-site tRNA. In Ehrlichia ruminantium (strain Gardel), this protein is Small ribosomal subunit protein uS7.